We begin with the raw amino-acid sequence, 652 residues long: ATP-dependent zinc metalloprotease FtsH 1 (652 aa).

Topologically, residues 1-9 are cytoplasmic; sequence MSDNKWLRN. Residues 10–30 traverse the membrane as a helical segment; that stretch reads GFVWMILIIAAIAVWVTFVQG. Residues 31 to 110 lie on the Extracellular side of the membrane; sequence GRGGATITTQ…QTHRASQWGN (80 aa). Residues 111–131 traverse the membrane as a helical segment; sequence VLGTLTFLLPTLFLIGVIIFM. Over 132-652 the chain is Cytoplasmic; the sequence is MRQAQGTNNQ…VPHIKPQPAS (521 aa). Residue 203–210 coordinates ATP; it reads GPPGTGKT. Histidine 425 is a Zn(2+) binding site. Residue glutamate 426 is part of the active site. Residues histidine 429 and aspartate 501 each coordinate Zn(2+). The disordered stretch occupies residues 623–652; it reads IATPETARPDSPSEARPAAPVPHIKPQPAS. Residues 641–652 show a composition bias toward pro residues; it reads APVPHIKPQPAS.

In the central section; belongs to the AAA ATPase family. It in the C-terminal section; belongs to the peptidase M41 family. In terms of assembly, homohexamer. Zn(2+) is required as a cofactor.

It is found in the cell membrane. Functionally, acts as a processive, ATP-dependent zinc metallopeptidase for both cytoplasmic and membrane proteins. Plays a role in the quality control of integral membrane proteins. This is ATP-dependent zinc metalloprotease FtsH 1 from Thermomicrobium roseum (strain ATCC 27502 / DSM 5159 / P-2).